We begin with the raw amino-acid sequence, 213 residues long: Isopentenyl-diphosphate Delta-isomerase (213 aa).

The segment covering 1–10 (MRDSMSEADR) has biased composition (basic and acidic residues). The tract at residues 1–34 (MRDSMSEADRSSPGSGKTDREDETAENATQDVIA) is disordered. H51, H58, and H95 together coordinate Mn(2+). The region spanning 56 to 193 (VRHRAFTCLL…RQLRLCPWFE (138 aa)) is the Nudix hydrolase domain. Residue E113 participates in Mg(2+) binding. Positions 142 and 144 each coordinate Mn(2+). The active site involves E144.

Belongs to the IPP isomerase type 1 family. Mg(2+) serves as cofactor. It depends on Mn(2+) as a cofactor.

The protein resides in the cytoplasm. The enzyme catalyses isopentenyl diphosphate = dimethylallyl diphosphate. It functions in the pathway isoprenoid biosynthesis; dimethylallyl diphosphate biosynthesis; dimethylallyl diphosphate from isopentenyl diphosphate: step 1/1. Catalyzes the 1,3-allylic rearrangement of the homoallylic substrate isopentenyl (IPP) to its highly electrophilic allylic isomer, dimethylallyl diphosphate (DMAPP). The protein is Isopentenyl-diphosphate Delta-isomerase of Halobacterium salinarum (strain ATCC 700922 / JCM 11081 / NRC-1) (Halobacterium halobium).